We begin with the raw amino-acid sequence, 397 residues long: Elongation factor Tu (397 aa).

Residues 10–206 form the tr-type G domain; that stretch reads KPHVNIGTIG…EVDAYIPTPE (197 aa). The G1 stretch occupies residues 19–26; that stretch reads GHVDHGKT. 19-26 contacts GTP; it reads GHVDHGKT. Threonine 26 contributes to the Mg(2+) binding site. The tract at residues 60 to 64 is G2; sequence GITIN. The segment at 81-84 is G3; it reads DCPG. GTP contacts are provided by residues 81–85 and 136–139; these read DCPGH and NKAD. A G4 region spans residues 136-139; sequence NKAD. The G5 stretch occupies residues 174 to 176; it reads SAL.

Belongs to the TRAFAC class translation factor GTPase superfamily. Classic translation factor GTPase family. EF-Tu/EF-1A subfamily. Monomer.

The protein localises to the cytoplasm. It catalyses the reaction GTP + H2O = GDP + phosphate + H(+). Functionally, GTP hydrolase that promotes the GTP-dependent binding of aminoacyl-tRNA to the A-site of ribosomes during protein biosynthesis. This chain is Elongation factor Tu, found in Clostridium acetobutylicum (strain ATCC 824 / DSM 792 / JCM 1419 / IAM 19013 / LMG 5710 / NBRC 13948 / NRRL B-527 / VKM B-1787 / 2291 / W).